Reading from the N-terminus, the 426-residue chain is Zona pellucida sperm-binding protein 3 (426 aa).

An N-terminal signal peptide occupies residues 1–22 (MGLSYGIFICFLLLGGMELCCP). Q23 is subject to Pyrrolidone carboxylic acid. Topologically, residues 23-385 (QTIWPTETYY…IEGSTSPHTS (363 aa)) are extracellular. A ZP domain is found at 43–305 (DCLESQLVVT…KACSFIKSTK (263 aa)). Intrachain disulfides connect C44-C138 and C76-C97. N-linked (GlcNAc...) asparagine glycosylation is found at N123 and N145. O-linked (GalNAc...) threonine glycosylation is found at T154, T160, and T161. Intrachain disulfides connect C215–C280 and C237–C298. N244 is a glycosylation site (N-linked (GlcNAc...) asparagine). Residues 351 to 426 (RRHVTEEAEI…PVICPASVSQ (76 aa)) constitute a propeptide, removed in mature form. Residues 386 to 406 (VMLGLGLATVVSLTLATIVLV) form a helical membrane-spanning segment. At 407–426 (LAKRHRTASHPVICPASVSQ) the chain is on the cytoplasmic side.

It belongs to the ZP domain family. ZPC subfamily. Polymers of ZP2 and ZP3 organized into long filaments cross-linked by ZP1 homodimers. Interacts with ZP1 and ZP2. In terms of processing, proteolytically cleaved before the transmembrane segment to yield the secreted ectodomain incorporated in the zona pellucida. Post-translationally, N-glycosylated. O-glycosylated; removal of O-linked glycans may play an important role in the post-fertilization block to polyspermy. Expressed in oocytes.

Its subcellular location is the zona pellucida. It is found in the cell membrane. Its function is as follows. Component of the zona pellucida, an extracellular matrix surrounding oocytes which mediates sperm binding, induction of the acrosome reaction and prevents post-fertilization polyspermy. The zona pellucida is composed of 3 to 4 glycoproteins, ZP1, ZP2, ZP3, and ZP4. ZP3 is essential for sperm binding and zona matrix formation. This is Zona pellucida sperm-binding protein 3 (ZP3) from Canis lupus familiaris (Dog).